A 1049-amino-acid polypeptide reads, in one-letter code: Solvent-resistant pump membrane transporter SrpB (1049 aa).

A run of 12 helical transmembrane segments spans residues 10–30 (IFAWVLAIVAMLAGALSLAKM), 339–359 (SVVHTIFEAVVLVFLVMYLFL), 366–386 (LIPTLAVPVVLLATFALLPYF), 392–412 (VLTMYAMVLAIGLLVDDAIVV), 440–460 (GALVGIGMVLSAVFVPMAFFG), 470–490 (FAITIVVCMGLSILVALVFTP), 542–562 (LAFLLITGGTGYLFTQIPKAF), 871–891 (APLLYALTVLIVFLCLAALYE), 895–915 (VPVSVIMVVPLGILGAVLATL), 927–947 (VGLMTTVGLSAKNAILIVEFA), 973–993 (ILMTSLAFTFGVLPMAIASGA), and 1008–1028 (GMITATVLAVFFVPLFYVVVV).

It belongs to the resistance-nodulation-cell division (RND) (TC 2.A.6) family.

The protein resides in the cell inner membrane. The inner membrane transporter component of an organic solvent efflux pump. Involved in export of a number of low log POW compounds including hexane (log POW 3.5), toluene (log POW 2.5) and dimethylphthalate (log POW 2.3). The solvent resistance phenotype has been postulated to depend on the operon expression level. The chain is Solvent-resistant pump membrane transporter SrpB (srpB) from Pseudomonas putida (Arthrobacter siderocapsulatus).